Consider the following 214-residue polypeptide: ATP phosphoribosyltransferase (214 aa).

Belongs to the ATP phosphoribosyltransferase family. Short subfamily. As to quaternary structure, heteromultimer composed of HisG and HisZ subunits.

It is found in the cytoplasm. The catalysed reaction is 1-(5-phospho-beta-D-ribosyl)-ATP + diphosphate = 5-phospho-alpha-D-ribose 1-diphosphate + ATP. It participates in amino-acid biosynthesis; L-histidine biosynthesis; L-histidine from 5-phospho-alpha-D-ribose 1-diphosphate: step 1/9. Catalyzes the condensation of ATP and 5-phosphoribose 1-diphosphate to form N'-(5'-phosphoribosyl)-ATP (PR-ATP). Has a crucial role in the pathway because the rate of histidine biosynthesis seems to be controlled primarily by regulation of HisG enzymatic activity. This chain is ATP phosphoribosyltransferase, found in Nostoc punctiforme (strain ATCC 29133 / PCC 73102).